The primary structure comprises 281 residues: Probable endonuclease 4 (281 aa).

Residues H69, H109, E145, D179, H182, H216, D229, H231, and E261 each coordinate Zn(2+).

This sequence belongs to the AP endonuclease 2 family. Zn(2+) serves as cofactor.

The enzyme catalyses Endonucleolytic cleavage to 5'-phosphooligonucleotide end-products.. Endonuclease IV plays a role in DNA repair. It cleaves phosphodiester bonds at apurinic or apyrimidinic (AP) sites, generating a 3'-hydroxyl group and a 5'-terminal sugar phosphate. In Chlorobaculum parvum (strain DSM 263 / NCIMB 8327) (Chlorobium vibrioforme subsp. thiosulfatophilum), this protein is Probable endonuclease 4.